Reading from the N-terminus, the 527-residue chain is Ribonuclease Y 2 (527 aa).

A helical membrane pass occupies residues 2 to 22; sequence IAMIATAIIGIVAGGGLGWAL. One can recognise an HD domain in the interval 339–432; sequence QYFHCGEVGW…VIAADAVSGA (94 aa).

Belongs to the RNase Y family.

The protein localises to the cell membrane. Endoribonuclease that initiates mRNA decay. The polypeptide is Ribonuclease Y 2 (Bdellovibrio bacteriovorus (strain ATCC 15356 / DSM 50701 / NCIMB 9529 / HD100)).